The chain runs to 149 residues: Hordoindoline-A (149 aa).

A signal peptide spans 1 to 19 (MKALFLMGLLALVASAAFA). The propeptide occupies 20–28 (QYGEVVGSY). The propeptide at 148–149 (YW) is removed in mature form.

Five disulfide bonds are present. As to expression, found in endosperm and aleurone layer of developing kernels, but not in the embryo.

It is found in the membrane. It localises to the secreted. The protein localises to the extracellular space. Acts as a membranotoxin, probably through its antibacterial and antifungal activities, contributing to the defense mechanism of the plant against predators. Forms monovalent cation-selective ion channels in membranes. Contributes to grain texture and hardness. This Hordeum vulgare (Barley) protein is Hordoindoline-A (HINA).